The following is a 285-amino-acid chain: ATP synthase gamma chain (285 aa).

Belongs to the ATPase gamma chain family. In terms of assembly, F-type ATPases have 2 components, CF(1) - the catalytic core - and CF(0) - the membrane proton channel. CF(1) has five subunits: alpha(3), beta(3), gamma(1), delta(1), epsilon(1). CF(0) has three main subunits: a, b and c.

It localises to the cell membrane. In terms of biological role, produces ATP from ADP in the presence of a proton gradient across the membrane. The gamma chain is believed to be important in regulating ATPase activity and the flow of protons through the CF(0) complex. This Geobacillus sp. (strain WCH70) protein is ATP synthase gamma chain.